The chain runs to 205 residues: Cytochrome c biogenesis ATP-binding export protein CcmA (205 aa).

Positions 2-204 (LEVSNLTAIR…SPKLRKIKLG (203 aa)) constitute an ABC transporter domain. ATP is bound at residue 34-41 (GRNGTGKT).

This sequence belongs to the ABC transporter superfamily. CcmA exporter (TC 3.A.1.107) family. In terms of assembly, the complex is composed of two ATP-binding proteins (CcmA) and two transmembrane proteins (CcmB).

It is found in the cell inner membrane. It catalyses the reaction heme b(in) + ATP + H2O = heme b(out) + ADP + phosphate + H(+). Its function is as follows. Part of the ABC transporter complex CcmAB involved in the biogenesis of c-type cytochromes; once thought to export heme, this seems not to be the case, but its exact role is uncertain. Responsible for energy coupling to the transport system. This is Cytochrome c biogenesis ATP-binding export protein CcmA from Vibrio vulnificus (strain YJ016).